The primary structure comprises 340 residues: Dihydroorotate dehydrogenase (quinone) (340 aa).

FMN contacts are provided by residues 61 to 65 (AGLDK) and T85. K65 is a substrate binding site. Position 110–114 (110–114 (NRMGF)) interacts with substrate. The FMN site is built by N138 and N171. N171 is a binding site for substrate. S174 functions as the Nucleophile in the catalytic mechanism. N176 is a substrate binding site. FMN-binding residues include K216 and T244. Position 245–246 (245–246 (NT)) interacts with substrate. FMN-binding positions include G267, G296, and 317 to 318 (YT).

This sequence belongs to the dihydroorotate dehydrogenase family. Type 2 subfamily. As to quaternary structure, monomer. The cofactor is FMN.

Its subcellular location is the cell membrane. It catalyses the reaction (S)-dihydroorotate + a quinone = orotate + a quinol. Its pathway is pyrimidine metabolism; UMP biosynthesis via de novo pathway; orotate from (S)-dihydroorotate (quinone route): step 1/1. In terms of biological role, catalyzes the conversion of dihydroorotate to orotate with quinone as electron acceptor. This is Dihydroorotate dehydrogenase (quinone) from Marinobacter nauticus (strain ATCC 700491 / DSM 11845 / VT8) (Marinobacter aquaeolei).